Here is a 484-residue protein sequence, read N- to C-terminus: MGVISVQLVVTMVMASVIQKIIPHYSFARWLLCSGSLRWYQHPTEDELRTLAGKQQKGGKSKKDRKYNGHLENKPMTIPKDIDLQLETKCIAEVDTLALHYFPEFQWLVDFTVAATVVYLITELYFCVAEPSGEMNISVVWSLLVLAFVMKILFSLTAHYFRLEEGGERSLCITFAFFFFVKAMAILIVTENYLEFGLETGFANFSESAVQFLENQGLESQGPISKLTFKLILALLCALIGAFLTFPGLRLAQMHLDALTLNNCKVTQTLLHINFLAPLIMVLLWVKPITKDYITNPTFGKDNVPLMSEKTYDTLRLWVILLLCVLRLAMMRHHLQAYLNLAQKGVLQMKKEAGRISTVDLQKMVARVFYYLCVIALQYIAPLVMLLHTTLLLKTLGGHSWVIYSDESLPCLSNEDSSPAEVGQSQMEASQTVAQLSVALGGLRTVFSPLLFRGLLSFFTWWIAACLFSTSLFGLFYHQYLMAA.

Residues 108 to 128 form a helical membrane-spanning segment; the sequence is LVDFTVAATVVYLITELYFCV. The N-linked (GlcNAc...) asparagine glycan is linked to Asn-136. A run of 2 helical transmembrane segments spans residues 137–157 and 170–190; these read ISVVWSLLVLAFVMKILFSLT and SLCITFAFFFFVKAMAILIVT. Residue Asn-204 is glycosylated (N-linked (GlcNAc...) asparagine). The next 4 helical transmembrane spans lie at 229–249, 266–286, 368–388, and 456–476; these read FKLILALLCALIGAFLTFPGL, VTQTLLHINFLAPLIMVLLWV, VFYYLCVIALQYIAPLVMLLH, and LSFFTWWIAACLFSTSLFGLF.

Belongs to the TMEM161 family.

Its subcellular location is the cell membrane. Functionally, essential for maintaining normal cardiac rhythm in the developing heart and for neonatal survival. Inhibits potassium and calcium currents in the cardiomyocytes, this assists in timely action potential repolarization and thereby maintains normal cardiac rhythm. In Danio rerio (Zebrafish), this protein is Transmembrane protein 161B (tmem161b).